A 30-amino-acid polypeptide reads, in one-letter code: Snaclec carinactivase-1 regulatory subunit 17 kDa chain (30 aa).

Positions 1 to 30 (DCLPGWSSHEGHCYKVFNQEMYWADAEKFC) constitute a C-type lectin domain. A disulfide bridge links cysteine 2 with cysteine 13.

This sequence belongs to the snaclec family. As to quaternary structure, heterodimer of a metalloproteinase subunit and a regulatory subunit comprising two polypeptides disulfide-linked (14 kDa and 17 kDa chains). As to expression, expressed by the venom gland.

It is found in the secreted. In terms of biological role, calcium-dependent prothrombin activator. This protein may activate prothrombin via recognition by the regulatory subunit of the calcium ion bound conformation of its gamma-carboxyglutamic acid (GLA) domain, and the subsequent conversion of prothrombin to active thrombin is catalyzed by the catalytic subunit. This Echis carinatus (Saw-scaled viper) protein is Snaclec carinactivase-1 regulatory subunit 17 kDa chain.